We begin with the raw amino-acid sequence, 214 residues long: Cytochrome b (214 aa).

The next 4 helical transmembrane spans lie at phenylalanine 31–isoleucine 51, tryptophan 75–isoleucine 96, tryptophan 111–leucine 131, and phenylalanine 176–methionine 196. Heme b-binding residues include histidine 81 and histidine 95. Residues histidine 180 and histidine 194 each contribute to the heme b site. A ubiquinone is bound at residue histidine 199.

The protein belongs to the cytochrome b family. The cytochrome bc1 complex contains 3 respiratory subunits (MT-CYB, CYC1 and UQCRFS1), 2 core proteins (UQCRC1 and UQCRC2) and probably 6 low-molecular weight proteins. The cofactor is heme b.

It is found in the mitochondrion inner membrane. Its function is as follows. Component of the ubiquinol-cytochrome c reductase complex (complex III or cytochrome b-c1 complex) that is part of the mitochondrial respiratory chain. The b-c1 complex mediates electron transfer from ubiquinol to cytochrome c. Contributes to the generation of a proton gradient across the mitochondrial membrane that is then used for ATP synthesis. This Elapsoidea semiannulata (Angolan garter snake) protein is Cytochrome b (MT-CYB).